The chain runs to 252 residues: 2-succinyl-6-hydroxy-2,4-cyclohexadiene-1-carboxylate synthase (252 aa).

It belongs to the AB hydrolase superfamily. MenH family. Monomer.

The catalysed reaction is 5-enolpyruvoyl-6-hydroxy-2-succinyl-cyclohex-3-ene-1-carboxylate = (1R,6R)-6-hydroxy-2-succinyl-cyclohexa-2,4-diene-1-carboxylate + pyruvate. The protein operates within quinol/quinone metabolism; 1,4-dihydroxy-2-naphthoate biosynthesis; 1,4-dihydroxy-2-naphthoate from chorismate: step 3/7. Its pathway is quinol/quinone metabolism; menaquinone biosynthesis. Its function is as follows. Catalyzes a proton abstraction reaction that results in 2,5-elimination of pyruvate from 2-succinyl-5-enolpyruvyl-6-hydroxy-3-cyclohexene-1-carboxylate (SEPHCHC) and the formation of 2-succinyl-6-hydroxy-2,4-cyclohexadiene-1-carboxylate (SHCHC). In Escherichia coli (strain ATCC 8739 / DSM 1576 / NBRC 3972 / NCIMB 8545 / WDCM 00012 / Crooks), this protein is 2-succinyl-6-hydroxy-2,4-cyclohexadiene-1-carboxylate synthase.